The chain runs to 258 residues: Neurotrophin-3 (258 aa).

Residues 1–18 (MSILFYVIFLAYLRGIQG) form the signal peptide. A propeptide spanning residues 19 to 139 (NSMDQRSLPE…ANRTSPRRKR (121 aa)) is cleaved from the precursor. A disordered region spans residues 60–85 (QSTLPKAEAPREPEQGEATRSEFQPM). Basic and acidic residues predominate over residues 67–79 (EAPREPEQGEATR). Asn-131 is a glycosylation site (N-linked (GlcNAc...) asparagine). 3 cysteine pairs are disulfide-bonded: Cys-153-Cys-218, Cys-196-Cys-247, and Cys-206-Cys-249.

Belongs to the NGF-beta family. Brain and peripheral tissues.

It is found in the secreted. Functionally, seems to promote the survival of visceral and proprioceptive sensory neurons. This is Neurotrophin-3 (Ntf3) from Mus musculus (Mouse).